Consider the following 174-residue polypeptide: Large ribosomal subunit protein uL5 (174 aa).

The protein belongs to the universal ribosomal protein uL5 family. In terms of assembly, part of the 50S ribosomal subunit; contacts the 5S rRNA and probably tRNA. Forms a bridge to the 30S subunit in the 70S ribosome.

Its function is as follows. This is one of the proteins that bind and probably mediate the attachment of the 5S RNA into the large ribosomal subunit, where it forms part of the central protuberance. In the 70S ribosome it contacts protein S13 of the 30S subunit (bridge B1b), connecting the 2 subunits; this bridge is implicated in subunit movement. May contact the P site tRNA; the 5S rRNA and some of its associated proteins might help stabilize positioning of ribosome-bound tRNAs. This chain is Large ribosomal subunit protein uL5, found in Halorubrum lacusprofundi (strain ATCC 49239 / DSM 5036 / JCM 8891 / ACAM 34).